The primary structure comprises 548 residues: Membrane protein insertase YidC (548 aa).

A helical membrane pass occupies residues 6 to 26 (NLLVIALLFVSFMIWQAWEQD). Residues 28–54 (NPQPQTQQTTQTTTTAAGSAADQGVPA) are disordered. The span at 29-42 (PQPQTQQTTQTTTT) shows a compositional bias: low complexity. 4 consecutive transmembrane segments (helical) span residues 350–370 (FLGN…GIMY), 424–444 (FPLI…MGSI), 458–478 (LSAQ…MFFI), and 499–519 (PVIF…YYIV).

The protein belongs to the OXA1/ALB3/YidC family. Type 1 subfamily. In terms of assembly, interacts with the Sec translocase complex via SecD. Specifically interacts with transmembrane segments of nascent integral membrane proteins during membrane integration.

It is found in the cell inner membrane. Required for the insertion and/or proper folding and/or complex formation of integral membrane proteins into the membrane. Involved in integration of membrane proteins that insert both dependently and independently of the Sec translocase complex, as well as at least some lipoproteins. Aids folding of multispanning membrane proteins. The protein is Membrane protein insertase YidC of Citrobacter koseri (strain ATCC BAA-895 / CDC 4225-83 / SGSC4696).